Reading from the N-terminus, the 156-residue chain is MSRRNAAEKRPILPDPQFNSRLATMMVVRLMQHGKKSTAQRILSDAFGLINERTGGDPLELFETAVKNATPLVEVRARRVGGATYQVPMEVRQERGTAMALRWLVSFSRARNGRSMAQKLAGELMDAANEAGNAVRKREETHKMAEANKAFAHYRY.

It belongs to the universal ribosomal protein uS7 family. In terms of assembly, part of the 30S ribosomal subunit. Contacts proteins S9 and S11.

One of the primary rRNA binding proteins, it binds directly to 16S rRNA where it nucleates assembly of the head domain of the 30S subunit. Is located at the subunit interface close to the decoding center, probably blocks exit of the E-site tRNA. This chain is Small ribosomal subunit protein uS7, found in Synechococcus sp. (strain CC9605).